Reading from the N-terminus, the 326-residue chain is Glycerol-3-phosphate dehydrogenase [NAD(P)+] (326 aa).

Residues Trp15, Arg35, and Lys107 each contribute to the NADPH site. Sn-glycerol 3-phosphate contacts are provided by Lys107, Gly135, and Ser137. Ala139 contacts NADPH. Sn-glycerol 3-phosphate is bound by residues Lys190, Asp243, Ser253, Arg254, and Asn255. The active-site Proton acceptor is Lys190. Arg254 is an NADPH binding site. NADPH-binding residues include Leu273 and Glu275.

It belongs to the NAD-dependent glycerol-3-phosphate dehydrogenase family.

It is found in the cytoplasm. It catalyses the reaction sn-glycerol 3-phosphate + NAD(+) = dihydroxyacetone phosphate + NADH + H(+). It carries out the reaction sn-glycerol 3-phosphate + NADP(+) = dihydroxyacetone phosphate + NADPH + H(+). It functions in the pathway membrane lipid metabolism; glycerophospholipid metabolism. In terms of biological role, catalyzes the reduction of the glycolytic intermediate dihydroxyacetone phosphate (DHAP) to sn-glycerol 3-phosphate (G3P), the key precursor for phospholipid synthesis. This is Glycerol-3-phosphate dehydrogenase [NAD(P)+] from Bradyrhizobium diazoefficiens (strain JCM 10833 / BCRC 13528 / IAM 13628 / NBRC 14792 / USDA 110).